Here is a 395-residue protein sequence, read N- to C-terminus: MFAGGADGGNGHLPRPRRARRGGGGGGGMGSPPLGPPPPPCTDYDMAYFKAYSHIGVHEEMLKDHVRTNTYRNAIMHHQDLISGKVVLDVGCGTGVLSIFCAFAGAARVYAVDASDIALQAMEIVRENELSDKVIVLHGRIEDVEIEEKVDVIISEWMGYMLLYESMLGSVIFARDKWLKPGGLILPSHASLYLAPITNSHRYQDSVYFWQDVYGIKMSSMMPLAKQCAFMEPSVETISGENVLTWPSVVAQVDCYTIQAPELETITATFNYTSMLQAPLHGFAFWFDVEFNGPVRQRSKKQANQCLDGNTQDASPSNKKKKADAPIVLSTAPEDAPTHWQQTLLYLFEPIELKKDQNIEGSVTISQSQQHARFLNICLKYFTRDQWYVKESVMK.

Positions 1–11 (MFAGGADGGNG) are enriched in gly residues. A disordered region spans residues 1–37 (MFAGGADGGNGHLPRPRRARRGGGGGGGMGSPPLGPP). The region spanning 45–390 (DMAYFKAYSH…YFTRDQWYVK (346 aa)) is the SAM-dependent MTase PRMT-type domain. 5 residues coordinate S-adenosyl-L-methionine: His-58, Arg-67, Gly-91, Asp-113, and Glu-142. Catalysis depends on residues Glu-156 and Glu-165. Positions 300–324 (KKQANQCLDGNTQDASPSNKKKKAD) are disordered. A compositionally biased stretch (polar residues) spans 302-317 (QANQCLDGNTQDASPS).

The protein belongs to the class I-like SAM-binding methyltransferase superfamily. Protein arginine N-methyltransferase family. PRMT6 subfamily.

In terms of biological role, arginine methyltransferase that can both catalyze the formation of omega-N monomethylarginine (MMA) and asymmetrical dimethylarginine (aDMA). The polypeptide is Probable protein arginine N-methyltransferase 6.2 (PRMT6.2) (Oryza sativa subsp. indica (Rice)).